A 481-amino-acid polypeptide reads, in one-letter code: Proline--tRNA ligase (481 aa).

It belongs to the class-II aminoacyl-tRNA synthetase family. ProS type 3 subfamily. In terms of assembly, homodimer.

The protein localises to the cytoplasm. It carries out the reaction tRNA(Pro) + L-proline + ATP = L-prolyl-tRNA(Pro) + AMP + diphosphate. In terms of biological role, catalyzes the attachment of proline to tRNA(Pro) in a two-step reaction: proline is first activated by ATP to form Pro-AMP and then transferred to the acceptor end of tRNA(Pro). The polypeptide is Proline--tRNA ligase (Chloroherpeton thalassium (strain ATCC 35110 / GB-78)).